The sequence spans 416 residues: Gamma-glutamyl phosphate reductase (416 aa).

This sequence belongs to the gamma-glutamyl phosphate reductase family.

Its subcellular location is the cytoplasm. The enzyme catalyses L-glutamate 5-semialdehyde + phosphate + NADP(+) = L-glutamyl 5-phosphate + NADPH + H(+). The protein operates within amino-acid biosynthesis; L-proline biosynthesis; L-glutamate 5-semialdehyde from L-glutamate: step 2/2. Its function is as follows. Catalyzes the NADPH-dependent reduction of L-glutamate 5-phosphate into L-glutamate 5-semialdehyde and phosphate. The product spontaneously undergoes cyclization to form 1-pyrroline-5-carboxylate. The sequence is that of Gamma-glutamyl phosphate reductase from Streptococcus equi subsp. zooepidemicus (strain MGCS10565).